Reading from the N-terminus, the 510-residue chain is DNA-directed RNA polymerase I subunit RPA34 (510 aa).

The residue at position 1 (methionine 1) is an N-acetylmethionine. The interval 1-31 (MEEPQAGDAARFSCPPNFTAKPPASESPRFS) is disordered. At serine 27 the chain carries Phosphoserine. Phosphotyrosine is present on tyrosine 80. The tract at residues 120–143 (GPQQSLSGSPLQPIPASPPPQIPP) is disordered. 4 positions are modified to phosphoserine: serine 128, serine 136, serine 172, and serine 205. Over residues 131-143 (QPIPASPPPQIPP) the composition is skewed to pro residues. Positions 203–510 (LGSPEMDVRK…KRKQQQQQPV (308 aa)) are disordered. Residues 258–270 (GKETFEPEDKTVK) are compositionally biased toward basic and acidic residues. Residue lysine 270 forms a Glycyl lysine isopeptide (Lys-Gly) (interchain with G-Cter in SUMO1); alternate linkage. Lysine 270 participates in a covalent cross-link: Glycyl lysine isopeptide (Lys-Gly) (interchain with G-Cter in SUMO2); alternate. Serine 285 is subject to Phosphoserine. At threonine 287 the chain carries Phosphothreonine. A Phosphoserine modification is found at serine 309. A Glycyl lysine isopeptide (Lys-Gly) (interchain with G-Cter in SUMO1); alternate cross-link involves residue lysine 314. Lysine 314 participates in a covalent cross-link: Glycyl lysine isopeptide (Lys-Gly) (interchain with G-Cter in SUMO2); alternate. 2 stretches are compositionally biased toward low complexity: residues 372 to 382 (AKPQAQAALAA) and 394 to 407 (DATVEPETEVVGPE). Positions 421 to 430 (TKKKKKKKER) are enriched in basic residues. The span at 436–452 (EPIQPLEPELPGEGQPE) shows a compositional bias: low complexity. Serine 490 is subject to Phosphoserine.

It belongs to the eukaryotic RPA34 RNA polymerase subunit family. Component of the RNA polymerase I (Pol I) complex consisting of 13 subunits: a ten-subunit catalytic core composed of POLR1A/RPA1, POLR1B/RPA2, POLR1C/RPAC1, POLR1D/RPAC2, POLR1H/RPA12, POLR2E/RPABC1, POLR2F/RPABC2, POLR2H/RPABC3, POLR2K/RPABC4 and POLR2L/RPABC5; a mobile stalk subunit POLR1F/RPA43 protruding from the core and additional subunits homologous to general transcription factors POLR1E/RPA49 and POLR1G/RPA34. Forms a heterodimer with POLR1E/RPA49. Part of Pol I pre-initiation complex (PIC), in which Pol I core assembles with RRN3 and promoter-bound UTBF and SL1/TIF-IB complex. Interacts with TAF1A thereby associates with the SL1/TIF-IB complex. Interacts with UBTF. Interacts with POLR1E/PRAF1 through its N-terminal region. In terms of assembly, interacts with CD3E. In terms of processing, undergoes tyrosine phosphorylation upon T-cell receptor (TCR) stimulation. This phosphorylation has not been confirmed by other groups. Post-translationally, phosphorylated on tyrosine residues in initiation-competent Pol I-beta complexes but not in Pol I-alpha complexes.

The protein resides in the nucleus. The protein localises to the nucleolus. It is found in the chromosome. Its function is as follows. Component of RNA polymerase I (Pol I), a DNA-dependent RNA polymerase which synthesizes ribosomal RNA precursors using the four ribonucleoside triphosphates as substrates. Involved in UBTF-activated transcription, presumably at a step following PIC formation. In terms of biological role, has been described as a component of preformed T-cell receptor (TCR) complex. The polypeptide is DNA-directed RNA polymerase I subunit RPA34 (Homo sapiens (Human)).